We begin with the raw amino-acid sequence, 169 residues long: Sorting nexin-24 (169 aa).

N-acetylmethionine is present on methionine 1. The 125-residue stretch at 1 to 125 (MEVYIPSFRH…SFDETESEES (125 aa)) folds into the PX domain. Positions 38, 40, 61, and 74 each coordinate a 1,2-diacyl-sn-glycero-3-phospho-(1D-myo-inositol-3-phosphate). 2 positions are modified to phosphoserine: serine 113 and serine 116.

This sequence belongs to the sorting nexin family.

The protein resides in the cytoplasmic vesicle membrane. Functionally, may be involved in several stages of intracellular trafficking. The polypeptide is Sorting nexin-24 (Snx24) (Rattus norvegicus (Rat)).